The primary structure comprises 165 residues: Cyclic pyranopterin monophosphate synthase (165 aa).

Substrate-binding positions include 76–78 (LCH) and 114–115 (ME). Asp129 is a catalytic residue.

It belongs to the MoaC family. In terms of assembly, homohexamer; trimer of dimers.

It catalyses the reaction (8S)-3',8-cyclo-7,8-dihydroguanosine 5'-triphosphate = cyclic pyranopterin phosphate + diphosphate. The protein operates within cofactor biosynthesis; molybdopterin biosynthesis. In terms of biological role, catalyzes the conversion of (8S)-3',8-cyclo-7,8-dihydroguanosine 5'-triphosphate to cyclic pyranopterin monophosphate (cPMP). This is Cyclic pyranopterin monophosphate synthase from Brucella melitensis biotype 2 (strain ATCC 23457).